We begin with the raw amino-acid sequence, 233 residues long: Probable GTP-binding protein EngB (233 aa).

Residues 21-228 (GLPEVALVGR…WRWIREHVQD (208 aa)) enclose the EngB-type G domain. GTP is bound by residues 29 to 36 (GRSNVGKS) and 56 to 60 (GRTQA). Mg(2+)-binding residues include Ser-36 and Thr-58. Residues 68–87 (PQGKPRPEGEPQPDKDAGRT) form a disordered region. Basic and acidic residues predominate over residues 72-85 (PRPEGEPQPDKDAG). Residues 107-110 (DMPG), 174-177 (TKAD), and 207-209 (FSA) contribute to the GTP site.

The protein belongs to the TRAFAC class TrmE-Era-EngA-EngB-Septin-like GTPase superfamily. EngB GTPase family. Mg(2+) serves as cofactor.

Its function is as follows. Necessary for normal cell division and for the maintenance of normal septation. This is Probable GTP-binding protein EngB from Symbiobacterium thermophilum (strain DSM 24528 / JCM 14929 / IAM 14863 / T).